Consider the following 148-residue polypeptide: Endoribonuclease YbeY (148 aa).

The Zn(2+) site is built by histidine 113, histidine 117, and histidine 123.

Belongs to the endoribonuclease YbeY family. The cofactor is Zn(2+).

The protein localises to the cytoplasm. In terms of biological role, single strand-specific metallo-endoribonuclease involved in late-stage 70S ribosome quality control and in maturation of the 3' terminus of the 16S rRNA. This Borrelia recurrentis (strain A1) protein is Endoribonuclease YbeY.